The primary structure comprises 416 residues: UDP-N-acetylmuramoylalanine--D-glutamate ligase (416 aa).

ATP is bound at residue 108–114 (GTVGKTT).

This sequence belongs to the MurCDEF family.

It localises to the cytoplasm. It carries out the reaction UDP-N-acetyl-alpha-D-muramoyl-L-alanine + D-glutamate + ATP = UDP-N-acetyl-alpha-D-muramoyl-L-alanyl-D-glutamate + ADP + phosphate + H(+). The protein operates within cell wall biogenesis; peptidoglycan biosynthesis. Its function is as follows. Cell wall formation. Catalyzes the addition of glutamate to the nucleotide precursor UDP-N-acetylmuramoyl-L-alanine (UMA). The sequence is that of UDP-N-acetylmuramoylalanine--D-glutamate ligase from Chlamydia muridarum (strain MoPn / Nigg).